The chain runs to 102 residues: Urease subunit beta (102 aa).

Belongs to the urease beta subunit family. As to quaternary structure, heterotrimer of UreA (gamma), UreB (beta) and UreC (alpha) subunits. Three heterotrimers associate to form the active enzyme.

It is found in the cytoplasm. The enzyme catalyses urea + 2 H2O + H(+) = hydrogencarbonate + 2 NH4(+). The protein operates within nitrogen metabolism; urea degradation; CO(2) and NH(3) from urea (urease route): step 1/1. This chain is Urease subunit beta, found in Acinetobacter baumannii (strain ACICU).